The primary structure comprises 449 residues: Exodeoxyribonuclease 7 large subunit (449 aa).

Belongs to the XseA family. As to quaternary structure, heterooligomer composed of large and small subunits.

It localises to the cytoplasm. The enzyme catalyses Exonucleolytic cleavage in either 5'- to 3'- or 3'- to 5'-direction to yield nucleoside 5'-phosphates.. Bidirectionally degrades single-stranded DNA into large acid-insoluble oligonucleotides, which are then degraded further into small acid-soluble oligonucleotides. This Salmonella newport (strain SL254) protein is Exodeoxyribonuclease 7 large subunit.